The following is a 392-amino-acid chain: MEWWASSPLRLWLLLFLLPSAQGRQKESGSKWKVFIDQINRSLENYEPCSSQNCSCYHGVIEEDLTPFRGGISRKMMAEVVRRKLGTHYQITKNRLYRENDCMFPSRCSGVEHFILEVIGRLPDMEMVINVRDYPQVPKWMEPAIPVFSFSKTSEYHDIMYPAWTFWEGGPAVWPIYPTGLGRWDLFREDLVRSAAQWPWKKKNSTAYFRGSRTSPERDPLILLSRKNPKLVDAEYTKNQAWKSMKDTLGKPAAKDVHLVDHCKYKYLFNFRGVAASFRFKHLFLCGSLVFHVGDEWLEFFYPQLKPWVHYIPVKTDLSNVQELLQFVKANDDVAQEIAERGSQFIRNHLQMDDITCYWENLLSEYSKFLSYNVTRRKGYDQIIPKMLKTEL.

The signal sequence occupies residues 1-23 (MEWWASSPLRLWLLLFLLPSAQG). 2 N-linked (GlcNAc...) asparagine glycosylation sites follow: Asn40 and Asn53. 4 cysteine pairs are disulfide-bonded: Cys49/Cys56, Cys54/Cys357, Cys102/Cys108, and Cys263/Cys286. Residues 103 to 107 (MFPSR) form an interaction with the consensus sequence C-X-S-X-[PA]-C in peptide substrates region. The active-site Proton donor/acceptor is Asp133. The segment at 172 to 178 (AVWPIYP) is interaction with the consensus sequence C-X-S-X-[PA]-C in peptide substrates. Tyr177 lines the UDP-alpha-D-glucose pocket. N-linked (GlcNAc...) asparagine glycosylation occurs at Asn204. UDP-alpha-D-glucose contacts are provided by residues Ser212, Arg218, and 274–279 (VAASFR). Residue Asn373 is glycosylated (N-linked (GlcNAc...) asparagine). A Prevents secretion from ER motif is present at residues 389–392 (KTEL).

It belongs to the glycosyltransferase 90 family. Expressed in most adult tissues at different intensities. Abundantly expressed in liver. Expressed also in brain, heart, skeletal muscle, spleen, kidney, placenta, lung and peripheral blood leukocyte. Not detectable in colon, thymus and small intestine. Expressed in the epidermis, especially in the upper parts, stratum spinosum and stratum granulosum (at protein level).

Its subcellular location is the endoplasmic reticulum lumen. It carries out the reaction L-seryl-[EGF-like domain protein] + UDP-alpha-D-xylose = 3-O-(beta-D-xylosyl)-L-seryl-[EGF-like domain protein] + UDP + H(+). It catalyses the reaction L-seryl-[EGF-like domain protein] + UDP-alpha-D-glucose = 3-O-(beta-D-glucosyl)-L-seryl-[EGF-like domain protein] + UDP + H(+). The protein operates within protein modification; protein glycosylation. In terms of biological role, dual specificity glycosyltransferase that catalyzes the transfer of glucose and xylose from UDP-glucose and UDP-xylose, respectively, to a serine residue found in the consensus sequence of C-X-S-X-P-C. Specifically targets extracellular EGF repeats of protein such as CRB2, F7, F9 and NOTCH2. Acts as a positive regulator of Notch signaling by mediating O-glucosylation of Notch, leading to regulate muscle development. Notch glucosylation does not affect Notch ligand binding. Required during early development to promote gastrulation: acts by mediating O-glucosylation of CRB2, which is required for CRB2 localization to the cell membrane. In Homo sapiens (Human), this protein is Protein O-glucosyltransferase 1.